The primary structure comprises 445 residues: DDB1- and CUL4-associated factor 13 (445 aa).

WD repeat units follow at residues 64–104 (GHRD…CSRT), 107–146 (AHDGFVRGLCVRFCGTSFFTVGDDKTVKQWAMESPGYGEK), 152–191 (TILGKTVFTGIDHHVKDAVFATCGQQVDIWDEQRSAPMRS), 194–234 (WGVD…PLKK), 236–276 (ILEM…SPVK), 280–319 (DHVSAVLDVDYSPTGKELVSASFDKSIRIFPVQSGHSREV), and 323–362 (KRMQHVTCVRWSADNKYVLCGSDEMNIRIWKANASEKLGV). A required for nucleolar location region spans residues 353-441 (KANASEKLGV…IPSEKKKHVL (89 aa)). Basic residues-rich tracts occupy residues 413–426 (ARRKKDVNRRKHSK) and 436–445 (KKKHVLAVVE). Positions 413 to 445 (ARRKKDVNRRKHSKPGSVPIPSEKKKHVLAVVE) are disordered.

The protein belongs to the WD repeat DCAF13/WDSOF1 family. Part of the small subunit (SSU) processome, composed of more than 70 proteins and the RNA chaperone small nucleolar RNA (snoRNA) U3. Component of the DCX(DCAF13) E3 ubiquitin ligase complex, at least composed of CUL4 (CUL4A or CUL4B), DDB1, DCAF13 and RBX1.

The protein localises to the nucleus. It is found in the nucleolus. It functions in the pathway protein modification; protein ubiquitination. In terms of biological role, part of the small subunit (SSU) processome, first precursor of the small eukaryotic ribosomal subunit. During the assembly of the SSU processome in the nucleolus, many ribosome biogenesis factors, an RNA chaperone and ribosomal proteins associate with the nascent pre-rRNA and work in concert to generate RNA folding, modifications, rearrangements and cleavage as well as targeted degradation of pre-ribosomal RNA by the RNA exosome. Its function is as follows. Substrate-recognition component of a DCX (DDB1-CUL4-X-box) E3 ubiquitin-protein ligase complex. The chain is DDB1- and CUL4-associated factor 13 (dcaf13) from Xenopus laevis (African clawed frog).